Consider the following 130-residue polypeptide: Protein NrdI (130 aa).

The protein belongs to the NrdI family.

Functionally, probably involved in ribonucleotide reductase function. The protein is Protein NrdI of Bacillus velezensis (strain DSM 23117 / BGSC 10A6 / LMG 26770 / FZB42) (Bacillus amyloliquefaciens subsp. plantarum).